The following is a 325-amino-acid chain: Treponemal membrane protein B (325 aa).

An N-terminal signal peptide occupies residues 1-24 (MKTRNFSLVSALYVLLGVPLFVSA). An EAARKAAE repeat occupies 159–166 (EAARKAAE). The stretch at 167 to 189 (ARKLEEQRIAAQKAQEERKRAEE) is one ARKLEEQRIAAQKAQEERKRAEE repeat. The interval 176 to 224 (AAQKAQEERKRAEEEAARKAAEARKLEEQRIAAQKAQEERKRAEEEAAR) is disordered. Residues 190–197 (EAARKAAE) form an EAARKAAE repeat. The ARKLEEQRIAAQKAQEERKRAEE repeat unit spans residues 198 to 220 (ARKLEEQRIAAQKAQEERKRAEE). Residues 221–228 (EAARKAAE) form an EAARKAAE repeat. Residues 229–236 (EAARKAEE) form an EAARKAEE repeat.

It to T.phagedenis TmpB.

It localises to the cell outer membrane. Functionally, tmp may serve as a porin or transport protein for large molecules. This chain is Treponemal membrane protein B (tmpB), found in Treponema pallidum (strain Nichols).